Consider the following 48-residue polypeptide: Delta-stichotoxin-Hcr1e (48 aa).

3 cysteine pairs are disulfide-bonded: Cys3–Cys43, Cys5–Cys33, and Cys26–Cys44.

It belongs to the sea anemone sodium channel inhibitory toxin family. Type II subfamily.

The protein resides in the secreted. It is found in the nematocyst. Binds to site 3 of voltage-gated sodium channels and inhibits the inactivation process. This chain is Delta-stichotoxin-Hcr1e, found in Radianthus crispa (Leathery sea anemone).